Reading from the N-terminus, the 474-residue chain is Glutamine synthetase (474 aa).

In terms of domain architecture, GS beta-grasp spans 15-99; sequence EDVQFIDVRF…MTFFIHDPIT (85 aa). Residues 107–474 enclose the GS catalytic domain; it reads PRNIAKKAET…PYEFTLYYDI (368 aa). The Mg(2+) site is built by Glu132 and Glu134. Glu210 is a binding site for ATP. Mg(2+)-binding residues include Glu215 and Glu223. Residues 267–268 and Gly268 contribute to the L-glutamate site; that span reads NG. Residue His272 participates in Mg(2+) binding. Residues 274-276 and Ser276 each bind ATP; that span reads HSS. Residues Arg325, Glu331, and Arg343 each coordinate L-glutamate. Arg343, Arg348, and Lys357 together coordinate ATP. Glu362 provides a ligand contact to Mg(2+). Arg364 provides a ligand contact to L-glutamate. At Tyr402 the chain carries O-AMP-tyrosine.

Belongs to the glutamine synthetase family. As to quaternary structure, oligomer of 12 subunits arranged in the form of two hexagons. Mg(2+) is required as a cofactor.

It is found in the cytoplasm. It catalyses the reaction L-glutamate + NH4(+) + ATP = L-glutamine + ADP + phosphate + H(+). Its activity is regulated as follows. The activity of this enzyme could be controlled by adenylation under conditions of abundant glutamine. In terms of biological role, catalyzes the ATP-dependent biosynthesis of glutamine from glutamate and ammonia. The protein is Glutamine synthetase of Frankia alni.